The following is a 130-amino-acid chain: Large ribosomal subunit protein bL19c (130 aa).

This sequence belongs to the bacterial ribosomal protein bL19 family.

It localises to the plastid. It is found in the chloroplast. The protein is Large ribosomal subunit protein bL19c (rpl19) of Chlorella vulgaris (Green alga).